The sequence spans 420 residues: MVEKRFQPLARDAMAYVLAGGRGSRLKELTDRRAKPAVYFGGKTRIIDFALSNALNSGIRRIGVATQYKAHSLIRHMQRGWNFFRPERNESFDILPASQRVSETQWYEGTADAVYQNIDIIEPYGPEYMVILAGDHIYKMDYEWMLQQHVDSGAEVTIGCLEVPRMEAVGFGVMHVDEKDQIIDFVEKPADPPGIPGNPDFALASMGIYVFHTKFLIECLKRDAADPNSSRDFGKDIIPYIVKNGKAVAHRFAQSCVRSDFEREAYWRDVGTIDAYWQANIDLTAVVPELDIYDKSWPIWTYAEISPPAKFVHDDENRRGSAVSSVVAGDCIISGASLSNSLLFTGVRANSYSKLEGAVVLPSVKVGRHAQLKNVVIDHGVNIPEGLVVGEDPQLDAKRFRRTESGICLITQTMIDKLDI.

Alpha-D-glucose 1-phosphate contacts are provided by residues Tyr107, Gly172, 187-188 (EK), and Ser205.

Belongs to the bacterial/plant glucose-1-phosphate adenylyltransferase family. As to quaternary structure, homotetramer.

The catalysed reaction is alpha-D-glucose 1-phosphate + ATP + H(+) = ADP-alpha-D-glucose + diphosphate. The protein operates within glycan biosynthesis; glycogen biosynthesis. Its function is as follows. Involved in the biosynthesis of ADP-glucose, a building block required for the elongation reactions to produce glycogen. Catalyzes the reaction between ATP and alpha-D-glucose 1-phosphate (G1P) to produce pyrophosphate and ADP-Glc. This is Glucose-1-phosphate adenylyltransferase from Rhizobium rhizogenes (strain K84 / ATCC BAA-868) (Agrobacterium radiobacter).